The sequence spans 416 residues: Serine carboxypeptidase S10 family member 1 (416 aa).

The first 20 residues, 1 to 20, serve as a signal peptide directing secretion; sequence MMKLLFIIISIIFVINVSNS. N-linked (GlcNAc...) asparagine glycans are attached at residues asparagine 33 and asparagine 84. The active site involves serine 156. N-linked (GlcNAc...) asparagine glycans are attached at residues asparagine 235, asparagine 273, and asparagine 295. Aspartate 338 is an active-site residue. Asparagine 385 is a glycosylation site (N-linked (GlcNAc...) asparagine). Residue histidine 396 is part of the active site.

The protein belongs to the peptidase S10 family.

Its subcellular location is the secreted. Probable carboxypeptidase. The chain is Serine carboxypeptidase S10 family member 1 from Dictyostelium discoideum (Social amoeba).